Reading from the N-terminus, the 524-residue chain is CTP synthase (524 aa).

Residues Met-1–Val-263 are amidoligase domain. Ser-13 contributes to the CTP binding site. Residue Ser-13 coordinates UTP. Residues Gly-14–Ile-19 and Asp-71 contribute to the ATP site. Mg(2+) is bound by residues Asp-71 and Glu-137. CTP-binding positions include Asp-144–Glu-146, Lys-184–Gln-189, and Lys-220. UTP is bound by residues Lys-184–Gln-189 and Lys-220. The region spanning Arg-282–Gln-524 is the Glutamine amidotransferase type-1 domain. An L-glutamine-binding site is contributed by Gly-342. Cys-369 acts as the Nucleophile; for glutamine hydrolysis in catalysis. Residues Leu-370 to Gln-373, Glu-393, and Arg-451 contribute to the L-glutamine site. Residues His-499 and Glu-501 contribute to the active site.

The protein belongs to the CTP synthase family. As to quaternary structure, homotetramer.

It carries out the reaction UTP + L-glutamine + ATP + H2O = CTP + L-glutamate + ADP + phosphate + 2 H(+). The enzyme catalyses L-glutamine + H2O = L-glutamate + NH4(+). The catalysed reaction is UTP + NH4(+) + ATP = CTP + ADP + phosphate + 2 H(+). Its pathway is pyrimidine metabolism; CTP biosynthesis via de novo pathway; CTP from UDP: step 2/2. Allosterically activated by GTP, when glutamine is the substrate; GTP has no effect on the reaction when ammonia is the substrate. The allosteric effector GTP functions by stabilizing the protein conformation that binds the tetrahedral intermediate(s) formed during glutamine hydrolysis. Inhibited by the product CTP, via allosteric rather than competitive inhibition. In terms of biological role, catalyzes the ATP-dependent amination of UTP to CTP with either L-glutamine or ammonia as the source of nitrogen. Regulates intracellular CTP levels through interactions with the four ribonucleotide triphosphates. This is CTP synthase from Thermotoga maritima (strain ATCC 43589 / DSM 3109 / JCM 10099 / NBRC 100826 / MSB8).